The sequence spans 21 residues: Glucose-1-phosphate adenylyltransferase large subunit (21 aa).

Residues 1–21 (SVTADNASETKVREIGQEKSS) are disordered. Over residues 8–21 (SETKVREIGQEKSS) the composition is skewed to basic and acidic residues.

The protein belongs to the bacterial/plant glucose-1-phosphate adenylyltransferase family. As to quaternary structure, heterotetramer.

It is found in the plastid. Its subcellular location is the chloroplast. The protein localises to the amyloplast. The enzyme catalyses alpha-D-glucose 1-phosphate + ATP + H(+) = ADP-alpha-D-glucose + diphosphate. It participates in glycan biosynthesis; starch biosynthesis. With respect to regulation, activated by 3'phosphoglycerate, inhibited by orthophosphate. Allosteric regulation. Its function is as follows. This protein plays a role in synthesis of starch. It catalyzes the synthesis of the activated glycosyl donor, ADP-glucose from Glc-1-P and ATP. This Spinacia oleracea (Spinach) protein is Glucose-1-phosphate adenylyltransferase large subunit.